The following is a 361-amino-acid chain: Histidinol-phosphate aminotransferase (361 aa).

The disordered stretch occupies residues 26–45 (GMDPEDLTKLSSNENPHGPS). Residue Lys-222 is modified to N6-(pyridoxal phosphate)lysine.

This sequence belongs to the class-II pyridoxal-phosphate-dependent aminotransferase family. Histidinol-phosphate aminotransferase subfamily. Pyridoxal 5'-phosphate is required as a cofactor.

It catalyses the reaction L-histidinol phosphate + 2-oxoglutarate = 3-(imidazol-4-yl)-2-oxopropyl phosphate + L-glutamate. Its pathway is amino-acid biosynthesis; L-histidine biosynthesis; L-histidine from 5-phospho-alpha-D-ribose 1-diphosphate: step 7/9. This chain is Histidinol-phosphate aminotransferase (hisC), found in Haloferax volcanii (strain ATCC 29605 / DSM 3757 / JCM 8879 / NBRC 14742 / NCIMB 2012 / VKM B-1768 / DS2) (Halobacterium volcanii).